A 188-amino-acid polypeptide reads, in one-letter code: Probable RNA 2'-phosphotransferase (188 aa).

The protein belongs to the KptA/TPT1 family.

In terms of biological role, removes the 2'-phosphate from RNA via an intermediate in which the phosphate is ADP-ribosylated by NAD followed by a presumed transesterification to release the RNA and generate ADP-ribose 1''-2''-cyclic phosphate (APPR&gt;P). May function as an ADP-ribosylase. The sequence is that of Probable RNA 2'-phosphotransferase from Lacticaseibacillus paracasei (strain ATCC 334 / BCRC 17002 / CCUG 31169 / CIP 107868 / KCTC 3260 / NRRL B-441) (Lactobacillus paracasei).